A 1014-amino-acid chain; its full sequence is MICAL-like protein 2 (1014 aa).

The Calponin-homology (CH) domain occupies 1–107; it reads MAAIKALQEW…YVSQYYNYFH (107 aa). A forms an intramolecular interaction with the C-terminal coiled coil domain keeping the protein in a closed conformation region spans residues 1–261; that stretch reads MAAIKALQEW…KLSNLASRQP (261 aa). Phosphoserine is present on residues S110, S144, and S154. The disordered stretch occupies residues 114 to 181; that stretch reads GMAGMKRPSS…PSPKAAPGTV (68 aa). Residues 187-249 form the LIM zinc-binding domain; sequence SICGVCGKHV…THHSSEAVSV (63 aa). The residue at position 250 (S250) is a Phosphoserine. A necessary and sufficient for interaction with actinins region spans residues 262 to 394; that stretch reads GGGIADTRPI…QGQAASKGVK (133 aa). Residues 262 to 810 are mediates targeting to the cell plasma membrane; that stretch reads GGGIADTRPI…QDDQTRSCKE (549 aa). 2 disordered regions span residues 311–450 and 609–780; these read LTPP…SRVP and TLPK…RRKK. Residues 332-355 show a composition bias toward polar residues; it reads STVTTTSANSKATTHVTNSSPVGW. Residues 356–368 are compositionally biased toward low complexity; it reads SSSAQSSTGTSGS. The span at 384 to 398 shows a compositional bias: polar residues; the sequence is PQGQAASKGVKTQLN. Low complexity-rich tracts occupy residues 399-419 and 438-447; these read SSTD…SSRT and PASSSSSHAS. Composition is skewed to polar residues over residues 624 to 633 and 646 to 656; these read LSHSTTQAFS and VGSTSWTSVSL. 2 stretches are compositionally biased toward basic and acidic residues: residues 701-711 and 720-737; these read EGWRARLKPVD and LEQK…DTPR. A compositionally biased stretch (polar residues) spans 747-758; it reads IHITLTPIQQKR. T759 carries the phosphothreonine modification. Phosphoserine is present on residues S773 and S837. The interval 811–918 is forms an intramolecular interaction with the N-terminal Calponin-homology and LIM zinc-binding domains-containing region keeping the protein in a closed conformation; sequence KTATWGTRES…LMYKSKDQCL (108 aa). One can recognise a bMERB domain in the interval 838-985; sequence PVRLHPNYIS…EQEEDQMLES (148 aa). Residues 845-885 adopt a coiled-coil conformation; it reads YISQEELQRQLQDIERQLDALELRGVELEKRLRAAEGDASE. Residues 918–1014 form a mediates interaction with RAB13 and is required for transition from the closed to the open conformation region; the sequence is LEERQLDLQG…WSSKSKSGQT (97 aa).

As to quaternary structure, interacts with RAB13 (GTP-bound form); competes with RAB8A and is involved in tight junctions assembly. Interacts with RAB8A; competes with RAB13 and is involved in E-cadherin endocytic recycling. Interacts with RAB8B. Interacts (preferentially in opened conformation) with ACTN1 and ACTN4; stimulated by RAB13 activation. Interacts (via calponin-homology (CH) domain) with the filamins FLNA, FLNB and FLNC (via actin-binding domain).

The protein localises to the cell membrane. It is found in the cell junction. The protein resides in the tight junction. It localises to the recycling endosome. Its subcellular location is the cell projection. The protein localises to the neuron projection. It is found in the cytoplasm. The protein resides in the cytoskeleton. Effector of small Rab GTPases which is involved in junctional complexes assembly through the regulation of cell adhesion molecules transport to the plasma membrane and actin cytoskeleton reorganization. Regulates the endocytic recycling of occludins, claudins and E-cadherin to the plasma membrane and may thereby regulate the establishment of tight junctions and adherens junctions. In parallel, may regulate actin cytoskeleton reorganization directly through interaction with F-actin or indirectly through actinins and filamins. Most probably involved in the processes of epithelial cell differentiation, cell spreading and neurite outgrowth. Undergoes liquid-liquid phase separation to form tubular recycling endosomes. Plays 2 sequential roles in the biogenesis of tubular recycling endosomes: first organizes phase separation and then the closed form formed by interaction with RAB8A promotes endosomal tubulation. This is MICAL-like protein 2 (Micall2) from Rattus norvegicus (Rat).